The chain runs to 541 residues: Chaperonin GroEL (541 aa).

ATP contacts are provided by residues T29–P32, D86–T90, G413, N476–A478, and D492.

The protein belongs to the chaperonin (HSP60) family. Forms a cylinder of 14 subunits composed of two heptameric rings stacked back-to-back. Interacts with the co-chaperonin GroES.

The protein resides in the cytoplasm. It carries out the reaction ATP + H2O + a folded polypeptide = ADP + phosphate + an unfolded polypeptide.. Its function is as follows. Together with its co-chaperonin GroES, plays an essential role in assisting protein folding. The GroEL-GroES system forms a nano-cage that allows encapsulation of the non-native substrate proteins and provides a physical environment optimized to promote and accelerate protein folding. The protein is Chaperonin GroEL of Rhodococcus hoagii (Corynebacterium equii).